The sequence spans 108 residues: MAEQILVTTTENIPGRKYEIIGEVFGVTTQSKNAIRDFGAGLKSIVGGEIKAYTSMLTESRDQSIARLRQNASEMGANAVVMMRFDSGSIAGDMQSVVAYGTAVKFID.

The protein belongs to the UPF0145 family.

The chain is UPF0145 protein LJ_1287 from Lactobacillus johnsonii (strain CNCM I-12250 / La1 / NCC 533).